Consider the following 354-residue polypeptide: 3-isopropylmalate dehydrogenase (354 aa).

An NAD(+)-binding site is contributed by Gly-76–Glu-87. Substrate-binding residues include Arg-94, Arg-104, Arg-130, and Asp-215. Asp-215, Asp-239, and Asp-243 together coordinate Mg(2+). Gly-273–Asn-285 is a binding site for NAD(+).

This sequence belongs to the isocitrate and isopropylmalate dehydrogenases family. LeuB type 1 subfamily. Homodimer. Mg(2+) serves as cofactor. Mn(2+) is required as a cofactor.

The protein localises to the cytoplasm. The enzyme catalyses (2R,3S)-3-isopropylmalate + NAD(+) = 4-methyl-2-oxopentanoate + CO2 + NADH. The protein operates within amino-acid biosynthesis; L-leucine biosynthesis; L-leucine from 3-methyl-2-oxobutanoate: step 3/4. Catalyzes the oxidation of 3-carboxy-2-hydroxy-4-methylpentanoate (3-isopropylmalate) to 3-carboxy-4-methyl-2-oxopentanoate. The product decarboxylates to 4-methyl-2 oxopentanoate. In Bacillus cereus (strain ATCC 10987 / NRS 248), this protein is 3-isopropylmalate dehydrogenase.